A 350-amino-acid polypeptide reads, in one-letter code: UDP-N-acetylenolpyruvoylglucosamine reductase (350 aa).

Residues 24–195 (HVDATARWLL…VAVEFNLPLL (172 aa)) enclose the FAD-binding PCMH-type domain. The active site involves Arg-172. The active-site Proton donor is Ser-245. Glu-342 is a catalytic residue.

Belongs to the MurB family. Requires FAD as cofactor.

It localises to the cytoplasm. It catalyses the reaction UDP-N-acetyl-alpha-D-muramate + NADP(+) = UDP-N-acetyl-3-O-(1-carboxyvinyl)-alpha-D-glucosamine + NADPH + H(+). Its pathway is cell wall biogenesis; peptidoglycan biosynthesis. Functionally, cell wall formation. This is UDP-N-acetylenolpyruvoylglucosamine reductase from Xanthomonas campestris pv. campestris (strain 8004).